Consider the following 100-residue polypeptide: Urease subunit gamma (100 aa).

The protein belongs to the urease gamma subunit family. As to quaternary structure, heterotrimer of UreA (gamma), UreB (beta) and UreC (alpha) subunits. Three heterotrimers associate to form the active enzyme.

The protein localises to the cytoplasm. It carries out the reaction urea + 2 H2O + H(+) = hydrogencarbonate + 2 NH4(+). The protein operates within nitrogen metabolism; urea degradation; CO(2) and NH(3) from urea (urease route): step 1/1. This chain is Urease subunit gamma, found in Staphylococcus aureus (strain N315).